A 154-amino-acid chain; its full sequence is Myoglobin (154 aa).

Positions glycine 2–lysine 148 constitute a Globin domain. Position 4 is a phosphoserine (serine 4). Histidine 65 contacts nitrite. O2 is bound at residue histidine 65. Position 68 is a phosphothreonine (threonine 68). Position 94 (histidine 94) interacts with heme b.

This sequence belongs to the globin family. As to quaternary structure, monomeric.

It localises to the cytoplasm. The protein localises to the sarcoplasm. The enzyme catalyses Fe(III)-heme b-[protein] + nitric oxide + H2O = Fe(II)-heme b-[protein] + nitrite + 2 H(+). It carries out the reaction H2O2 + AH2 = A + 2 H2O. In terms of biological role, monomeric heme protein which primary function is to store oxygen and facilitate its diffusion within muscle tissues. Reversibly binds oxygen through a pentacoordinated heme iron and enables its timely and efficient release as needed during periods of heightened demand. Depending on the oxidative conditions of tissues and cells, and in addition to its ability to bind oxygen, it also has a nitrite reductase activity whereby it regulates the production of bioactive nitric oxide. Under stress conditions, like hypoxia and anoxia, it also protects cells against reactive oxygen species thanks to its pseudoperoxidase activity. In Oryctolagus cuniculus (Rabbit), this protein is Myoglobin (MB).